The chain runs to 92 residues: Large ribosomal subunit protein eL43 (92 aa).

Zn(2+)-binding residues include cysteine 39, cysteine 42, cysteine 57, and cysteine 60.

It belongs to the eukaryotic ribosomal protein eL43 family. In terms of assembly, component of the large ribosomal subunit. Mature ribosomes consist of a small (40S) and a large (60S) subunit. The 40S subunit contains 32 different proteins and 1 molecule of RNA (18S). The 60S subunit contains 45 different proteins and 3 molecules of RNA (25S, 5.8S and 5S). Zn(2+) is required as a cofactor.

It is found in the cytoplasm. Component of the ribosome, a large ribonucleoprotein complex responsible for the synthesis of proteins in the cell. The small ribosomal subunit (SSU) binds messenger RNAs (mRNAs) and translates the encoded message by selecting cognate aminoacyl-transfer RNA (tRNA) molecules. The large subunit (LSU) contains the ribosomal catalytic site termed the peptidyl transferase center (PTC), which catalyzes the formation of peptide bonds, thereby polymerizing the amino acids delivered by tRNAs into a polypeptide chain. The nascent polypeptides leave the ribosome through a tunnel in the LSU and interact with protein factors that function in enzymatic processing, targeting, and the membrane insertion of nascent chains at the exit of the ribosomal tunnel. The chain is Large ribosomal subunit protein eL43 from Candida albicans (strain SC5314 / ATCC MYA-2876) (Yeast).